The following is a 314-amino-acid chain: Regulator of microtubule dynamics protein 1 (314 aa).

At K165 the chain carries N6-succinyllysine. 2 TPR repeats span residues 168–204 and 222–258; these read AICLSDVGDYEGIKAKIANAYIIKEHFEKAIELNPKD and PWYQRRIAKMLFATPPSSTYEKALSYFHRAEQVDPNF.

The protein belongs to the RMDN family. As to quaternary structure, interacts with microtubules.

It is found in the cytoplasm. The protein localises to the cytoskeleton. The protein resides in the spindle. It localises to the spindle pole. This is Regulator of microtubule dynamics protein 1 (RMDN1) from Pongo abelii (Sumatran orangutan).